Consider the following 110-residue polypeptide: Transcription factor S (110 aa).

C4, C7, C22, C25, C71, C74, C99, and C102 together coordinate Zn(2+). The segment at C4–C25 adopts a C4-type zinc-finger fold. The segment at T67–R107 adopts a TFIIS-type zinc-finger fold.

This sequence belongs to the archaeal RpoM/eukaryotic RPA12/RPB9/RPC11 RNA polymerase family.

In terms of biological role, induces RNA cleavage activity in the RNA polymerase. In its presence, the cleavage activity of the RNA polymerase truncates the RNA back to position +15 in a stepwise manner by releasing mainly dinucleotides from the 3'-end of the nascent RNA. The truncated RNAs are able to continue elongation. Involved in transcriptional proofreading and fidelity. Misincorporation of nucleotides during elongation of transcription leads to arrested elongation complexes which are rescued by TFS-promoted removal of a dinucleotide from the 3'-end. TFS is able to induce a cleavage resynthesis cycle in stalled elongation complexes (resulting from the next missing nucleotide or a reduced incorporation rate of a wrong nucleotide) preventing misincorporation and enabling proofreading in a post-incorporation manner. Pausing of elongation complexes is the main determinant of TFS-induced RNA cleavage. The polypeptide is Transcription factor S (Thermococcus celer).